The sequence spans 294 residues: MKTKIIVIVGPTAVGKTALAIEVAKRFNGEVVSGDSQQVYRGLDIGTAKASPEEQAAVPHHLIDVREITESYSAFDFVSEAKMTIEDIQSRGKLAIIAGGTGLYIQSLLEGYHLGGETPHEEILAYRASLEPYSDEELAHLVEQAGLEIPQFNRRRAMRALEIAHFGQDLENQEILYEPLIICLDDERSQLYERINHRVDLMFEAGLLDEAKWLFDHSPNVQAAKGIGYKELFPYFRGEQTFEEARESLKQATRRFAKRQLTWFRNRMQVTFYQIGESGVQDRILSQIEEFLDD.

Gly-10–Thr-17 contacts ATP. Thr-12–Thr-17 is a substrate binding site. The segment at Asp-35 to Gln-38 is interaction with substrate tRNA.

The protein belongs to the IPP transferase family. Monomer. Mg(2+) serves as cofactor.

It catalyses the reaction adenosine(37) in tRNA + dimethylallyl diphosphate = N(6)-dimethylallyladenosine(37) in tRNA + diphosphate. In terms of biological role, catalyzes the transfer of a dimethylallyl group onto the adenine at position 37 in tRNAs that read codons beginning with uridine, leading to the formation of N6-(dimethylallyl)adenosine (i(6)A). The chain is tRNA dimethylallyltransferase from Streptococcus pneumoniae (strain ATCC 700669 / Spain 23F-1).